Reading from the N-terminus, the 169-residue chain is Allophycocyanin subunit beta-18 (169 aa).

An N4-methylasparagine modification is found at Asn-72. Cys-82 serves as a coordination point for (2R,3E)-phycocyanobilin.

Belongs to the phycobiliprotein family. Heterodimer of ApcE and this beta chain. Contains one covalently linked bilin chromophore.

Its subcellular location is the cellular thylakoid membrane. Its function is as follows. A variant beta-allophycocyanin (AP) which forms a complex with ApcE, a phycobilisome terminal emitter that influences energy transfer to photosystem II. The chain is Allophycocyanin subunit beta-18 (apcF) from Synechocystis sp. (strain ATCC 27184 / PCC 6803 / Kazusa).